The primary structure comprises 91 residues: Elongation factor 1-beta (91 aa).

Belongs to the EF-1-beta/EF-1-delta family.

In terms of biological role, promotes the exchange of GDP for GTP in EF-1-alpha/GDP, thus allowing the regeneration of EF-1-alpha/GTP that could then be used to form the ternary complex EF-1-alpha/GTP/AAtRNA. This Thermofilum pendens (strain DSM 2475 / Hrk 5) protein is Elongation factor 1-beta.